The chain runs to 517 residues: GMP synthase [glutamine-hydrolyzing] (517 aa).

The Glutamine amidotransferase type-1 domain maps to 11-202 (KIIALDFGSQ…AFDVCGAKAN (192 aa)). Cys-88 (nucleophile) is an active-site residue. Catalysis depends on residues His-176 and Glu-178. The GMPS ATP-PPase domain occupies 203 to 392 (WTMDDFIDMQ…LGIPHELVWR (190 aa)). 230 to 236 (SGGVDSS) provides a ligand contact to ATP.

Homodimer.

The enzyme catalyses XMP + L-glutamine + ATP + H2O = GMP + L-glutamate + AMP + diphosphate + 2 H(+). It functions in the pathway purine metabolism; GMP biosynthesis; GMP from XMP (L-Gln route): step 1/1. Catalyzes the synthesis of GMP from XMP. In Limosilactobacillus reuteri (strain DSM 20016) (Lactobacillus reuteri), this protein is GMP synthase [glutamine-hydrolyzing].